A 97-amino-acid chain; its full sequence is Aspartyl/glutamyl-tRNA(Asn/Gln) amidotransferase subunit C (97 aa).

It belongs to the GatC family. Heterotrimer of A, B and C subunits.

It carries out the reaction L-glutamyl-tRNA(Gln) + L-glutamine + ATP + H2O = L-glutaminyl-tRNA(Gln) + L-glutamate + ADP + phosphate + H(+). The catalysed reaction is L-aspartyl-tRNA(Asn) + L-glutamine + ATP + H2O = L-asparaginyl-tRNA(Asn) + L-glutamate + ADP + phosphate + 2 H(+). In terms of biological role, allows the formation of correctly charged Asn-tRNA(Asn) or Gln-tRNA(Gln) through the transamidation of misacylated Asp-tRNA(Asn) or Glu-tRNA(Gln) in organisms which lack either or both of asparaginyl-tRNA or glutaminyl-tRNA synthetases. The reaction takes place in the presence of glutamine and ATP through an activated phospho-Asp-tRNA(Asn) or phospho-Glu-tRNA(Gln). The chain is Aspartyl/glutamyl-tRNA(Asn/Gln) amidotransferase subunit C from Prochlorococcus marinus (strain MIT 9515).